Here is a 104-residue protein sequence, read N- to C-terminus: Ig kappa chain b5 variant C region (104 aa).

The 96-residue stretch at 5–100 (PTVLIFPPSP…SGSPVVQSFS (96 aa)) folds into the Ig-like domain. C26 and C85 are disulfide-bonded.

The chain is Ig kappa chain b5 variant C region from Oryctolagus cuniculus (Rabbit).